Consider the following 163-residue polypeptide: Lipoprotein signal peptidase (163 aa).

4 helical membrane-spanning segments follow: residues 9-29 (AWPW…SKYL), 42-62 (ILPF…SFLG), 67-87 (WQII…ILWL), and 93-113 (SEIM…GNFI). Residues aspartate 123 and aspartate 141 contribute to the active site. Residues 137 to 157 (FNVADSAICVGVFLLIVHMLL) traverse the membrane as a helical segment.

This sequence belongs to the peptidase A8 family.

The protein resides in the cell inner membrane. It carries out the reaction Release of signal peptides from bacterial membrane prolipoproteins. Hydrolyzes -Xaa-Yaa-Zaa-|-(S,diacylglyceryl)Cys-, in which Xaa is hydrophobic (preferably Leu), and Yaa (Ala or Ser) and Zaa (Gly or Ala) have small, neutral side chains.. It functions in the pathway protein modification; lipoprotein biosynthesis (signal peptide cleavage). This protein specifically catalyzes the removal of signal peptides from prolipoproteins. This chain is Lipoprotein signal peptidase, found in Coxiella burnetii (strain RSA 493 / Nine Mile phase I).